The primary structure comprises 174 residues: NADH-quinone oxidoreductase subunit B 2 (174 aa).

The [4Fe-4S] cluster site is built by Cys-38, Cys-39, Cys-104, and Cys-133.

Belongs to the complex I 20 kDa subunit family. As to quaternary structure, NDH-1 is composed of 14 different subunits. Subunits NuoB, C, D, E, F, and G constitute the peripheral sector of the complex. The cofactor is [4Fe-4S] cluster.

It is found in the cell membrane. The catalysed reaction is a quinone + NADH + 5 H(+)(in) = a quinol + NAD(+) + 4 H(+)(out). Functionally, NDH-1 shuttles electrons from NADH, via FMN and iron-sulfur (Fe-S) centers, to quinones in the respiratory chain. The immediate electron acceptor for the enzyme in this species is believed to be ubiquinone. Couples the redox reaction to proton translocation (for every two electrons transferred, four hydrogen ions are translocated across the cytoplasmic membrane), and thus conserves the redox energy in a proton gradient. The chain is NADH-quinone oxidoreductase subunit B 2 from Chloroflexus aurantiacus (strain ATCC 29366 / DSM 635 / J-10-fl).